Consider the following 428-residue polypeptide: Adenylosuccinate synthetase (428 aa).

GTP is bound by residues 12–18 (GDEGKGK) and 40–42 (GHT). The Proton acceptor role is filled by D13. Mg(2+)-binding residues include D13 and G40. Residues 13 to 16 (DEGK), 38 to 41 (NAGH), T129, R143, Q224, T239, and R303 contribute to the IMP site. H41 (proton donor) is an active-site residue. 299 to 305 (VTTGRIR) serves as a coordination point for substrate. Residues R305, 331 to 333 (KVD), and 410 to 412 (AYG) each bind GTP.

This sequence belongs to the adenylosuccinate synthetase family. As to quaternary structure, homodimer. It depends on Mg(2+) as a cofactor.

It is found in the cytoplasm. It carries out the reaction IMP + L-aspartate + GTP = N(6)-(1,2-dicarboxyethyl)-AMP + GDP + phosphate + 2 H(+). It participates in purine metabolism; AMP biosynthesis via de novo pathway; AMP from IMP: step 1/2. Functionally, plays an important role in the de novo pathway of purine nucleotide biosynthesis. Catalyzes the first committed step in the biosynthesis of AMP from IMP. The sequence is that of Adenylosuccinate synthetase from Francisella philomiragia subsp. philomiragia (strain ATCC 25017 / CCUG 19701 / FSC 153 / O#319-036).